A 939-amino-acid polypeptide reads, in one-letter code: Translation initiation factor IF-2 (939 aa).

A disordered region spans residues 57–274; the sequence is RLKPAAPAAP…APTKKNEQKI (218 aa). Basic and acidic residues-rich tracts occupy residues 83-122 and 129-138; these read MEPKEEPQKEVKESVKEAPESLPESPKEEAFEAEIPKESV and LEQEPPKEEL. Polar residues-rich tracts occupy residues 146 to 158 and 170 to 180; these read ESASETLSDSNPL and VATTLATQTDA. The span at 208-227 shows a compositional bias: basic and acidic residues; sequence KRSEEPAPKADRPSLEEART. Positions 252-262 are enriched in basic residues; it reads ARKKKKEKKKP. Residues 438-607 form the tr-type G domain; sequence ERPPVVTIMG…LVQSELLELK (170 aa). Residues 447 to 454 are G1; sequence GHVDHGKT. 447-454 contacts GTP; sequence GHVDHGKT. The interval 472-476 is G2; the sequence is GITQH. The G3 stretch occupies residues 493-496; it reads DTPG. Residues 493–497 and 547–550 each bind GTP; these read DTPGH and NKVD. The G4 stretch occupies residues 547–550; sequence NKVD. The interval 583 to 585 is G5; sequence SAK.

This sequence belongs to the TRAFAC class translation factor GTPase superfamily. Classic translation factor GTPase family. IF-2 subfamily.

Its subcellular location is the cytoplasm. Its function is as follows. One of the essential components for the initiation of protein synthesis. Protects formylmethionyl-tRNA from spontaneous hydrolysis and promotes its binding to the 30S ribosomal subunits. Also involved in the hydrolysis of GTP during the formation of the 70S ribosomal complex. The protein is Translation initiation factor IF-2 of Wolinella succinogenes (strain ATCC 29543 / DSM 1740 / CCUG 13145 / JCM 31913 / LMG 7466 / NCTC 11488 / FDC 602W) (Vibrio succinogenes).